The primary structure comprises 603 residues: UvrABC system protein C (603 aa).

Positions 15–92 constitute a GIY-YIG domain; sequence DQPGCYLMKD…IKKHDPRFNI (78 aa). Positions 197 to 232 constitute a UVR domain; sequence KTVKNDLMKKMQEAAENMEFEKAGEFRDQINAIETT.

This sequence belongs to the UvrC family. As to quaternary structure, interacts with UvrB in an incision complex.

It is found in the cytoplasm. In terms of biological role, the UvrABC repair system catalyzes the recognition and processing of DNA lesions. UvrC both incises the 5' and 3' sides of the lesion. The N-terminal half is responsible for the 3' incision and the C-terminal half is responsible for the 5' incision. The sequence is that of UvrABC system protein C from Listeria monocytogenes serotype 4b (strain CLIP80459).